A 463-amino-acid polypeptide reads, in one-letter code: MTQLLAITGTIAAIATAIVPQQGSVGIVRVSGSQAIAIAQTLFHAPGKQVWESHRILYGYIRHPQTRQIVDEALLLLMKAPRSYTREDVVEFHCHGGIMAVQQVLQLCLEGGARLAQPGEFTLRAFLNGRLDLTQAESIADLVGARSPQAAQTALAGLQGKLAHPIRQLRANCLDILAEIEARIDFEEDLPPLDDEKIISDIENIAAEISQLLATKDKGELLRTGLKVAIVGRPNVGKSSLLNAWSQSDRAIVTDLPGTTRDVVESQLVVGGIPVQVLDTAGIRETSDQVEKIGVERSRQAANTADLVLLTIDAATGWTTGDQEIYEQVKHRPLILVMNKIDLVDKKLITSLEYPKNITQIVHTAAAQKQGIDALETAILEIVQTGKVKAADMDLAINQRQAAALTQAKISLEQVQATITQQLPLDFWTIDLRGAIQALGEITGEEVTESVLDRIFSRFCIGK.

Residues arginine 29, glutamate 91, and arginine 130 each contribute to the (6S)-5-formyl-5,6,7,8-tetrahydrofolate site. The region spanning 225–384 (GLKVAIVGRP…LETAILEIVQ (160 aa)) is the TrmE-type G domain. Position 235 (asparagine 235) interacts with K(+). GTP is bound by residues 235–240 (NVGKSS), 254–260 (TDLPGTT), and 279–282 (DTAG). Serine 239 lines the Mg(2+) pocket. K(+) contacts are provided by threonine 254, leucine 256, and threonine 259. Mg(2+) is bound at residue threonine 260. A (6S)-5-formyl-5,6,7,8-tetrahydrofolate-binding site is contributed by lysine 463.

Belongs to the TRAFAC class TrmE-Era-EngA-EngB-Septin-like GTPase superfamily. TrmE GTPase family. In terms of assembly, homodimer. Heterotetramer of two MnmE and two MnmG subunits. The cofactor is K(+).

Its subcellular location is the cytoplasm. Its function is as follows. Exhibits a very high intrinsic GTPase hydrolysis rate. Involved in the addition of a carboxymethylaminomethyl (cmnm) group at the wobble position (U34) of certain tRNAs, forming tRNA-cmnm(5)s(2)U34. This Trichormus variabilis (strain ATCC 29413 / PCC 7937) (Anabaena variabilis) protein is tRNA modification GTPase MnmE.